Reading from the N-terminus, the 117-residue chain is Large ribosomal subunit protein uL22c (117 aa).

The protein belongs to the universal ribosomal protein uL22 family. As to quaternary structure, part of the 50S ribosomal subunit.

It localises to the plastid. The protein resides in the chloroplast. This protein binds specifically to 23S rRNA. In terms of biological role, the globular domain of the protein is located near the polypeptide exit tunnel on the outside of the subunit, while an extended beta-hairpin is found that lines the wall of the exit tunnel in the center of the 70S ribosome. This is Large ribosomal subunit protein uL22c (rpl22) from Pyropia yezoensis (Susabi-nori).